An 89-amino-acid polypeptide reads, in one-letter code: Cell division protein ZapA (89 aa).

The protein belongs to the ZapA family. Type 2 subfamily. As to quaternary structure, homodimer. Interacts with FtsZ.

It localises to the cytoplasm. In terms of biological role, activator of cell division through the inhibition of FtsZ GTPase activity, therefore promoting FtsZ assembly into bundles of protofilaments necessary for the formation of the division Z ring. It is recruited early at mid-cell but it is not essential for cell division. In Bacillus thuringiensis (strain Al Hakam), this protein is Cell division protein ZapA.